The primary structure comprises 263 residues: Putative methyltransferase DDB_G0268948 (263 aa).

The protein belongs to the methyltransferase superfamily.

The polypeptide is Putative methyltransferase DDB_G0268948 (Dictyostelium discoideum (Social amoeba)).